A 315-amino-acid chain; its full sequence is Aspartate carbamoyltransferase catalytic subunit (315 aa).

Residues Arg-64 and Thr-65 each coordinate carbamoyl phosphate. Lys-92 serves as a coordination point for L-aspartate. Residues Arg-114, His-142, and Gln-145 each coordinate carbamoyl phosphate. L-aspartate contacts are provided by Arg-176 and Arg-230. 2 residues coordinate carbamoyl phosphate: Gly-271 and Pro-272.

This sequence belongs to the aspartate/ornithine carbamoyltransferase superfamily. ATCase family. In terms of assembly, heterododecamer (2C3:3R2) of six catalytic PyrB chains organized as two trimers (C3), and six regulatory PyrI chains organized as three dimers (R2).

The catalysed reaction is carbamoyl phosphate + L-aspartate = N-carbamoyl-L-aspartate + phosphate + H(+). It functions in the pathway pyrimidine metabolism; UMP biosynthesis via de novo pathway; (S)-dihydroorotate from bicarbonate: step 2/3. Its function is as follows. Catalyzes the condensation of carbamoyl phosphate and aspartate to form carbamoyl aspartate and inorganic phosphate, the committed step in the de novo pyrimidine nucleotide biosynthesis pathway. This chain is Aspartate carbamoyltransferase catalytic subunit, found in Lawsonia intracellularis (strain PHE/MN1-00).